A 665-amino-acid chain; its full sequence is MTKYSESYCDVLIVGAGPAGLMAARVLSEYVRQKPDLKVRIIDKRSTKVYNGQADGLQCRTLESLKNLGLADKILSEANDMSTIALYNPDENGHIRRTDRIPDTLPGISRYHQVVLHQGRIERHILDSIAEISDTRIKVERPLIPEKMEIDSSKAEDPEAYPVTMTLRYMSDHESTPLQFGHKTENSLFHSNLQTQEEEDANYRLPEGKEAGEIETVHCKYVIGCDGGHSWVRRTLGFEMIGEQTDYIWGVLDAVPASNFPDIRSPCAIHSAESGSIMIIPRENNLVRFYVQLQARAEKGGRVDRTKFTPEVVIANAKKIFHPYTFDVQQLDWFTAYHIGQRVTEKFSKDERVFIAGDACHTHSPKAGQGMNTSMMDTYNLGWKLGLVLTGRAKRDILKTYEEERHAFAQALIDFDHQFSRLFSGRPAKDVADEMGVSMDVFKEAFVKGNEFASGTAINYDENLVTDKKSSKQELAKNCVVGTRFKSQPVVRHSEGLWMHFGDRLVTDGRFRIIVFAGKATDATQMSRIKKFSAYLDSENSVISLYTPKVSDRNSRIDVITIHSCHRDDIEMHDFPAPALHPKWQYDFIYADCDSWHHPHPKSYQAWGVDETKGAVVVVRPDGYTSLVTDLEGTAEIDRYFSGILVEPKEKSGAQTEADWTKSTA.

FAD contacts are provided by residues 18-19, 43-45, 51-56, Gln118, Tyr290, Asp358, and 368-372; these read PA, DKR, NGQADG, and GQGMN. Residue Asp55 coordinates substrate. Position 290 (Tyr290) interacts with substrate.

Belongs to the PheA/TfdB FAD monooxygenase family. Homodimer. FAD is required as a cofactor.

It carries out the reaction phenol + NADPH + O2 + H(+) = catechol + NADP(+) + H2O. It participates in aromatic compound metabolism; phenol degradation. Inhibited by excess phenol. Heavy metals such AsCuSO(4), AgNO(3), or HgCl(2) severely inhibit activity. Hydroxylates phenol to catechol. Phenol is the best substrate, but the enzyme also accepts isomeric diphenols, hydroxyl-, amino-, halogen- or methyl-substituted phenols and, to a lesser degree, cresols. This chain is Phenol hydroxylase, found in Cutaneotrichosporon cutaneum (Yeast).